The primary structure comprises 317 residues: Melanocyte-stimulating hormone receptor (317 aa).

The Extracellular segment spans residues 1 to 37; sequence MPVQGSQRRLLGSLNSTPTATPHLGLAANQTGARCLE. An N-linked (GlcNAc...) asparagine glycan is attached at asparagine 29. Residues 38–63 traverse the membrane as a helical segment; sequence VSIPDGLFLSLGLVSLVENVLVVTAI. The Cytoplasmic segment spans residues 64–72; it reads AKNRNLHSP. The chain crosses the membrane as a helical span at residues 73–93; sequence MYCFICCLALSDLLVSGSNML. The Extracellular portion of the chain corresponds to 94–118; that stretch reads ETAVILLLEAGALAARAAVVQQLDN. Residues 119 to 140 traverse the membrane as a helical segment; the sequence is VIDVITCSSMLASLCFLGAIAV. The Cytoplasmic portion of the chain corresponds to 141–163; it reads DRYISIFYALRYHSIVTLPRARR. The helical transmembrane segment at 164-183 threads the bilayer; the sequence is AVAAIWVASVLFSMLFIAYY. Residues 184 to 191 are Extracellular-facing; the sequence is DHAAVLLC. A helical membrane pass occupies residues 192 to 211; that stretch reads LVVFFLAMLVLMAVLYIHML. The Cytoplasmic segment spans residues 212-240; sequence ARARQHAQGIARLHKRQCPAHQGFGLKGA. A helical transmembrane segment spans residues 241–266; the sequence is ATLTILLGIFFLCWGPFFLHLTLIVL. At 267–279 the chain is on the extracellular side; that stretch reads CPQHPTCSCIFKN. Residues 280–300 traverse the membrane as a helical segment; it reads FNLFLALIICNAIIDPLIYAF. Residues 301–317 are Cytoplasmic-facing; that stretch reads RSQELRRTLKEVLLCSW. Cysteine 315 carries the S-palmitoyl cysteine lipid modification.

It belongs to the G-protein coupled receptor 1 family. Interacts with MGRN1, but does not undergo MGRN1-mediated ubiquitination; this interaction competes with GNAS-binding and thus inhibits agonist-induced cAMP production. Interacts with OPN3; the interaction results in a decrease in MC1R-mediated cAMP signaling and ultimately a decrease in melanin production in melanocytes.

The protein resides in the cell membrane. Receptor for MSH (alpha, beta and gamma) and ACTH. The activity of this receptor is mediated by G proteins which activate adenylate cyclase. Mediates melanogenesis, the production of eumelanin (black/brown) and phaeomelanin (red/yellow), via regulation of cAMP signaling in melanocytes. This Cercopithecus mitis (Blue monkey) protein is Melanocyte-stimulating hormone receptor (MC1R).